A 454-amino-acid chain; its full sequence is Elongation factor Tu, mitochondrial (454 aa).

The transit peptide at 1–51 directs the protein to the mitochondrion; that stretch reads MASVVLRNPSSKRLVPFSSQIYSRCGASVTSSYSISHSIGGDDLSSSTFGT. The region spanning 65–261 is the tr-type G domain; the sequence is KPHVNVGTIG…AVDEYIPDPV (197 aa). Positions 74–81 are G1; sequence GHVDHGKT. Residue 74 to 81 participates in GTP binding; the sequence is GHVDHGKT. Threonine 82 carries the post-translational modification Phosphothreonine. A G2 region spans residues 115–119; the sequence is GITIA. The interval 136 to 139 is G3; sequence DCPG. GTP-binding positions include 136 to 140 and 191 to 194; these read DCPGH and NKVD. The segment at 191 to 194 is G4; the sequence is NKVD. A G5 region spans residues 229 to 231; it reads SAL.

The protein belongs to the TRAFAC class translation factor GTPase superfamily. Classic translation factor GTPase family. EF-Tu/EF-1A subfamily.

The protein localises to the mitochondrion. Its function is as follows. This protein promotes the GTP-dependent binding of aminoacyl-tRNA to the A-site of ribosomes during protein biosynthesis. The sequence is that of Elongation factor Tu, mitochondrial (TUFA) from Arabidopsis thaliana (Mouse-ear cress).